A 186-amino-acid polypeptide reads, in one-letter code: ATP synthase subunit delta, chloroplastic (186 aa).

This sequence belongs to the ATPase delta chain family. F-type ATPases have 2 components, F(1) - the catalytic core - and F(0) - the membrane proton channel. F(1) has five subunits: alpha(3), beta(3), gamma(1), delta(1), epsilon(1). CF(0) has four main subunits: a(1), b(1), b'(1) and c(10-14). The alpha and beta chains form an alternating ring which encloses part of the gamma chain. F(1) is attached to F(0) by a central stalk formed by the gamma and epsilon chains, while a peripheral stalk is formed by the delta, b and b' chains.

The protein localises to the plastid. The protein resides in the chloroplast thylakoid membrane. Its function is as follows. F(1)F(0) ATP synthase produces ATP from ADP in the presence of a proton or sodium gradient. F-type ATPases consist of two structural domains, F(1) containing the extramembraneous catalytic core and F(0) containing the membrane proton channel, linked together by a central stalk and a peripheral stalk. During catalysis, ATP synthesis in the catalytic domain of F(1) is coupled via a rotary mechanism of the central stalk subunits to proton translocation. Functionally, this protein is part of the stalk that links CF(0) to CF(1). It either transmits conformational changes from CF(0) to CF(1) or is implicated in proton conduction. The chain is ATP synthase subunit delta, chloroplastic from Porphyra purpurea (Red seaweed).